The primary structure comprises 235 residues: Ribonuclease 3 (235 aa).

In terms of domain architecture, RNase III spans 7 to 135; it reads FAALEARLGH…VVAAVYLDGG (129 aa). E48 is a binding site for Mg(2+). The active site involves D52. Mg(2+)-binding residues include D121 and E124. The active site involves E124. Positions 160-229 constitute a DRBM domain; that stretch reads DPKTVLQEWA…ASAFLAREGV (70 aa).

Belongs to the ribonuclease III family. In terms of assembly, homodimer. It depends on Mg(2+) as a cofactor.

It is found in the cytoplasm. The enzyme catalyses Endonucleolytic cleavage to 5'-phosphomonoester.. In terms of biological role, digests double-stranded RNA. Involved in the processing of primary rRNA transcript to yield the immediate precursors to the large and small rRNAs (23S and 16S). Processes some mRNAs, and tRNAs when they are encoded in the rRNA operon. Processes pre-crRNA and tracrRNA of type II CRISPR loci if present in the organism. In Azorhizobium caulinodans (strain ATCC 43989 / DSM 5975 / JCM 20966 / LMG 6465 / NBRC 14845 / NCIMB 13405 / ORS 571), this protein is Ribonuclease 3.